The sequence spans 691 residues: Replication and transcription activator (691 aa).

Residues T366 and T367 are each glycosylated (O-linked (GlcNAc) threonine; by host). Disordered stretches follow at residues 482–582 and 626–677; these read EASG…SLPP and LDTP…QESG. Positions 504-513 are enriched in low complexity; that stretch reads TAAATAAEAT. The span at 515 to 531 shows a compositional bias: basic residues; it reads PKRKQRSKERSSKKRKA. The segment covering 539 to 556 has biased composition (low complexity); sequence TTPSTTTPGTSLGSITTP. Residues 655 to 677 are compositionally biased toward polar residues; the sequence is EYTQLQPVRATSATPANEVQESG.

This sequence belongs to the herpesviridae TAF50 family. In terms of assembly, homotetramer. Interacts with KTA/ORF57. Interacts with host PARP1; this interaction negatively regulates RTA/ORF50 transactivation activity. Interacts with host SMC5 and SMC6; these interactions remove the repressive chromatin structure to allow viral reactivation. Interacts with host POU2F1; this interaction enhances RTA/ORF50-mediated transactivation of several viral promoters including K-bZIP promoter.

Its subcellular location is the host nucleus. The catalysed reaction is S-ubiquitinyl-[E2 ubiquitin-conjugating enzyme]-L-cysteine + [acceptor protein]-L-lysine = [E2 ubiquitin-conjugating enzyme]-L-cysteine + N(6)-ubiquitinyl-[acceptor protein]-L-lysine.. In terms of biological role, transcriptional transactivator that is necessary and sufficient for reactivation of the virus from latency. Acts post-transcriptionally and transcriptionally to regulate viral lytic gene expression and synergistically with ORF57 activates certain early and late viral promoters including its own promoter. Autostimulation on its promoter is mediated by the formation of a ternary complex between ORF50 and the cellular components HGMB1 and POU2F1. Also possesses a bimodal activity in targeting proteins for degradation through using its own E3 ligase activity or by stabilizing and chaperoning host E3 ligases. These activities help to subvert the host innate and adaptive immune responses while also modulating the host transcriptome and protein landscape to promote virus production. For instance, targets the host SMC5/6 complex for ubiquitination and subsequent degradation through the ubiquitin-proteasome during reactivation while during latency, host SMC5/6 complex binds to the viral episome and condenses viral chromatin, creating a repressive chromatin structure to silence genome transcription. Hijacks the cellular E3 ligase complex RNF20/40 to increase the level of transcriptionally active RNA polymerase II on viral gene promoters thereby facilitating lytic gene expression. Acts as a SUMO-targeting ubiquitin ligase and affects general sumoylation of cellular proteins. Promotes the polyubiquitination and subsequent degradation of host MYD88 and thereby inhibits MYD88-mediated TLR4 signaling. Induces the degradation of vFLIP/ORF71 together with cellular ubiquitin ligase ITCH to prevent vFLIP-induced NF-kappa-B signaling. In Homo sapiens (Human), this protein is Replication and transcription activator (ORF50).